A 314-amino-acid chain; its full sequence is 2,3-dihydroxyphenylpropionate/2,3-dihydroxicinnamic acid 1,2-dioxygenase (314 aa).

Residue His115 is the Proton donor of the active site. His179 acts as the Proton acceptor in catalysis.

It belongs to the LigB/MhpB extradiol dioxygenase family. Homotetramer. Fe(2+) serves as cofactor.

It catalyses the reaction 3-(2,3-dihydroxyphenyl)propanoate + O2 = (2Z,4E)-2-hydroxy-6-oxonona-2,4-dienedioate + H(+). It carries out the reaction (2E)-3-(2,3-dihydroxyphenyl)prop-2-enoate + O2 = (2Z,4E,7E)-2-hydroxy-6-oxonona-2,4,7-trienedioate + H(+). It participates in aromatic compound metabolism; 3-phenylpropanoate degradation. In terms of biological role, catalyzes the non-heme iron(II)-dependent oxidative cleavage of 2,3-dihydroxyphenylpropionic acid and 2,3-dihydroxicinnamic acid into 2-hydroxy-6-ketononadienedioate and 2-hydroxy-6-ketononatrienedioate, respectively. In Cupriavidus pinatubonensis (strain JMP 134 / LMG 1197) (Cupriavidus necator (strain JMP 134)), this protein is 2,3-dihydroxyphenylpropionate/2,3-dihydroxicinnamic acid 1,2-dioxygenase.